Reading from the N-terminus, the 241-residue chain is DnaJ homolog subfamily C member 4 (241 aa).

Residues 34-99 (TYYELLGVHP…QSRRSYDDQL (66 aa)) enclose the J domain. The segment covering 88 to 99 (REQSRRSYDDQL) has biased composition (basic and acidic residues). The disordered stretch occupies residues 88-129 (REQSRRSYDDQLRSGSPPKSPRTTVHDKSAHQTHSSWTPPNA). The segment covering 119–129 (QTHSSWTPPNA) has biased composition (polar residues). A helical membrane pass occupies residues 156–175 (VLGYCLLLMLAGMGLHYIAF). Residues 212–241 (QQERQRLGQRQPPPSEPTQGPEIVPRGAGP) form a disordered region.

Its subcellular location is the membrane. The chain is DnaJ homolog subfamily C member 4 (DNAJC4) from Homo sapiens (Human).